A 406-amino-acid chain; its full sequence is RING finger protein PSH1 (406 aa).

The RING-type zinc finger occupies 30–72 (CSICHDYMFVPMMTPCGHNYCYGCLNTWFASNTQKELACPQCR). 2 positions are modified to phosphoserine: Ser143 and Ser191. Residues 209 to 406 (RFASTNPFAN…RVVLGDSDDE (198 aa)) form a disordered region. Acidic residues-rich tracts occupy residues 223–232 (SSEDDDSSEE), 256–274 (AVDDEDDEEEDEEEEEEMD), and 281–291 (IEDDEDDEDED). A Phosphothreonine modification is found at Thr310. A Phosphoserine modification is found at Ser403.

In terms of assembly, interacts with POB3 and SPT16.

It is found in the nucleus. The protein is RING finger protein PSH1 (PSH1) of Saccharomyces cerevisiae (strain ATCC 204508 / S288c) (Baker's yeast).